A 327-amino-acid polypeptide reads, in one-letter code: tRNA-modifying protein YgfZ (327 aa).

Folate-binding residues include W27 and W189.

Belongs to the tRNA-modifying YgfZ family.

The protein localises to the cytoplasm. Functionally, folate-binding protein involved in regulating the level of ATP-DnaA and in the modification of some tRNAs. It is probably a key factor in regulatory networks that act via tRNA modification, such as initiation of chromosomal replication. This chain is tRNA-modifying protein YgfZ, found in Klebsiella pneumoniae (strain 342).